The following is a 343-amino-acid chain: Mitochondrial distribution and morphology protein 34 (343 aa).

Positions 1–196 constitute an SMP-LTD domain; that stretch reads MSFVFPSWST…LPGIIHRLSQ (196 aa). 2 disordered regions span residues 227 to 255 and 300 to 325; these read EVEE…IGPG and GAGT…KAKR. Over residues 306-317 the composition is skewed to low complexity; that stretch reads SGRASLASSSVG.

The protein belongs to the MDM34 family. Component of the ER-mitochondria encounter structure (ERMES) or MDM complex, composed of MMM1, MDM10, MDM12 and MDM34.

Its subcellular location is the mitochondrion outer membrane. Functionally, component of the ERMES/MDM complex, which serves as a molecular tether to connect the endoplasmic reticulum (ER) and mitochondria. Components of this complex are involved in the control of mitochondrial shape and protein biogenesis, and function in nonvesicular lipid trafficking between the ER and mitochondria. MDM34 is required for the interaction of the ER-resident membrane protein MMM1 and the outer mitochondrial membrane-resident beta-barrel protein MDM10. The chain is Mitochondrial distribution and morphology protein 34 from Cryptococcus neoformans var. neoformans serotype D (strain B-3501A) (Filobasidiella neoformans).